Reading from the N-terminus, the 618-residue chain is Leucine aminopeptidase 2 (618 aa).

Residues 139-141 (QCQ) and 271-276 (PYGGME) each bind a peptide. Histidine 300 is a binding site for Zn(2+). Catalysis depends on glutamate 301, which acts as the Proton acceptor. Residues histidine 304 and glutamate 323 each contribute to the Zn(2+) site. The active-site Proton donor is tyrosine 388.

The protein belongs to the peptidase M1 family. The cofactor is Zn(2+).

The protein localises to the cytoplasm. It is found in the nucleus. It carries out the reaction an epoxide + H2O = an ethanediol. In terms of biological role, aminopeptidase that preferentially cleaves di- and tripeptides. Also has low epoxide hydrolase activity (in vitro). Can hydrolyze the epoxide leukotriene LTA(4) but it forms preferentially 5,6-dihydroxy-7,9,11,14-eicosatetraenoic acid rather than the cytokine leukotriene B(4) as the product compared to the homologous mammalian enzyme (in vitro). This Aspergillus niger (strain ATCC MYA-4892 / CBS 513.88 / FGSC A1513) protein is Leucine aminopeptidase 2.